The chain runs to 310 residues: N-acetyl-gamma-glutamyl-phosphate reductase (310 aa).

Residue C117 is part of the active site.

Belongs to the NAGSA dehydrogenase family. Type 2 subfamily.

The protein resides in the cytoplasm. It carries out the reaction N-acetyl-L-glutamate 5-semialdehyde + phosphate + NADP(+) = N-acetyl-L-glutamyl 5-phosphate + NADPH + H(+). The protein operates within amino-acid biosynthesis; L-arginine biosynthesis; N(2)-acetyl-L-ornithine from L-glutamate: step 3/4. Catalyzes the NADPH-dependent reduction of N-acetyl-5-glutamyl phosphate to yield N-acetyl-L-glutamate 5-semialdehyde. This chain is N-acetyl-gamma-glutamyl-phosphate reductase, found in Brucella suis (strain ATCC 23445 / NCTC 10510).